The sequence spans 344 residues: Dihydroorotase (344 aa).

Residues His-14 and His-16 each contribute to the Zn(2+) site. Substrate is bound by residues 16 to 18 (HFR) and Asn-42. 3 residues coordinate Zn(2+): Lys-100, His-137, and His-175. An N6-carboxylysine modification is found at Lys-100. A substrate-binding site is contributed by His-137. Residue Leu-220 participates in substrate binding. Asp-248 contacts Zn(2+). Asp-248 is an active-site residue. Substrate contacts are provided by His-252 and Ala-264.

The protein belongs to the metallo-dependent hydrolases superfamily. DHOase family. Class II DHOase subfamily. In terms of assembly, homodimer. It depends on Zn(2+) as a cofactor.

The catalysed reaction is (S)-dihydroorotate + H2O = N-carbamoyl-L-aspartate + H(+). It participates in pyrimidine metabolism; UMP biosynthesis via de novo pathway; (S)-dihydroorotate from bicarbonate: step 3/3. In terms of biological role, catalyzes the reversible cyclization of carbamoyl aspartate to dihydroorotate. This is Dihydroorotase from Erythrobacter litoralis (strain HTCC2594).